The primary structure comprises 365 residues: Ribosome biogenesis regulatory protein homolog (365 aa).

N-acetylmethionine is present on Met-1. Ser-5 carries the post-translational modification Phosphoserine. Glycyl lysine isopeptide (Lys-Gly) (interchain with G-Cter in SUMO2) cross-links involve residues Lys-154 and Lys-226. The interval 233 to 253 (GRFQERLPKEKVPRGSGKKRK) is disordered. A compositionally biased stretch (basic and acidic residues) spans 235–245 (FQERLPKEKVP). A Glycyl lysine isopeptide (Lys-Gly) (interchain with G-Cter in SUMO2) cross-link involves residue Lys-266. The residue at position 273 (Arg-273) is a Citrulline. The disordered stretch occupies residues 280 to 365 (PQLDVTRATN…GQRPGGKRRK (86 aa)). Residues 302-325 (KRRKMSQKGKRKGGRQGPGGKRKG) show a composition bias toward basic residues. Gly residues predominate over residues 337-350 (GLGGKMNSGPPGLG). The segment covering 351-365 (GKRKGGQRPGGKRRK) has biased composition (basic residues).

Belongs to the RRS1 family. In terms of assembly, component of a hexameric 5S RNP precursor complex, composed of 5S RNA, RRS1, RPF2/BXDC1, RPL5, RPL11 and HEATR3; this complex acts as a precursor for ribosome assembly. In terms of processing, citrullinated by PADI4.

The protein resides in the nucleus. Its subcellular location is the nucleolus. Functionally, involved in ribosomal large subunit assembly. May regulate the localization of the 5S RNP/5S ribonucleoprotein particle to the nucleolus. The protein is Ribosome biogenesis regulatory protein homolog (RRS1) of Homo sapiens (Human).